Here is a 63-residue protein sequence, read N- to C-terminus: MKASELREKSVEELNAELLGLLREQFNLRMQHATGQLTQTNQLKLVRRNIARVKTIITSKAGA.

It belongs to the universal ribosomal protein uL29 family.

The chain is Large ribosomal subunit protein uL29 from Shewanella baltica (strain OS223).